Consider the following 210-residue polypeptide: Uracil phosphoribosyltransferase (210 aa).

5-phospho-alpha-D-ribose 1-diphosphate is bound by residues Arg-78, Arg-103, and 130-138 (DPMLATGGT). Uracil-binding positions include Ile-193 and 198–200 (GDA). Residue Asp-199 participates in 5-phospho-alpha-D-ribose 1-diphosphate binding.

This sequence belongs to the UPRTase family. Mg(2+) is required as a cofactor.

It carries out the reaction UMP + diphosphate = 5-phospho-alpha-D-ribose 1-diphosphate + uracil. The protein operates within pyrimidine metabolism; UMP biosynthesis via salvage pathway; UMP from uracil: step 1/1. Allosterically activated by GTP. Its function is as follows. Catalyzes the conversion of uracil and 5-phospho-alpha-D-ribose 1-diphosphate (PRPP) to UMP and diphosphate. This Stenotrophomonas maltophilia (strain K279a) protein is Uracil phosphoribosyltransferase.